Reading from the N-terminus, the 173-residue chain is Histone deacetylase complex subunit SAP30 homolog (173 aa).

Residues 21 to 69 form an Atypical zinc finger; that stretch reads CCLLDDGDRCRNQAGNASYSKRIQKTVTQRRLKLSIDTAARHIYICDFH.

Belongs to the SAP30 family. In terms of assembly, component of the class 1 Sin3-histone deacetylase complex (HDAC).

It is found in the nucleus. Its function is as follows. Required for the function of the class 1 Sin3-histone deacetylase complex (HDAC). The polypeptide is Histone deacetylase complex subunit SAP30 homolog (Aedes aegypti (Yellowfever mosquito)).